Consider the following 396-residue polypeptide: Elongation factor Tu (396 aa).

The 197-residue stretch at 10–206 folds into the tr-type G domain; that stretch reads KPHVNVGTIG…ALDTYIPLPE (197 aa). Positions 19 to 26 are G1; sequence GHVDHGKT. 19-26 is a GTP binding site; sequence GHVDHGKT. Thr-26 is a binding site for Mg(2+). Residues 60 to 64 are G2; sequence GITIN. A G3 region spans residues 81-84; it reads DCPG. GTP-binding positions include 81-85 and 136-139; these read DCPGH and NKCD. Positions 136 to 139 are G4; the sequence is NKCD. The interval 174 to 176 is G5; that stretch reads SAK.

Belongs to the TRAFAC class translation factor GTPase superfamily. Classic translation factor GTPase family. EF-Tu/EF-1A subfamily. In terms of assembly, monomer.

The protein localises to the cytoplasm. It catalyses the reaction GTP + H2O = GDP + phosphate + H(+). Its function is as follows. GTP hydrolase that promotes the GTP-dependent binding of aminoacyl-tRNA to the A-site of ribosomes during protein biosynthesis. The chain is Elongation factor Tu from Polaromonas sp. (strain JS666 / ATCC BAA-500).